We begin with the raw amino-acid sequence, 339 residues long: DNA-directed RNA polymerase subunit alpha (339 aa).

The interval 1 to 238 is alpha N-terminal domain (alpha-NTD); that stretch reads MVDPIVTKNW…EQLSIFINFD (238 aa). Residues 250–339 are alpha C-terminal domain (alpha-CTD); the sequence is VEEQKLNENL…KAAPQGAPKV (90 aa).

Belongs to the RNA polymerase alpha chain family. As to quaternary structure, homodimer. The RNAP catalytic core consists of 2 alpha, 1 beta, 1 beta' and 1 omega subunit. When a sigma factor is associated with the core the holoenzyme is formed, which can initiate transcription.

The enzyme catalyses RNA(n) + a ribonucleoside 5'-triphosphate = RNA(n+1) + diphosphate. DNA-dependent RNA polymerase catalyzes the transcription of DNA into RNA using the four ribonucleoside triphosphates as substrates. This chain is DNA-directed RNA polymerase subunit alpha, found in Anaeromyxobacter dehalogenans (strain 2CP-C).